Reading from the N-terminus, the 513-residue chain is Lysine--tRNA ligase (513 aa).

A compositionally biased stretch (polar residues) spans 1–11 (MTEPTQPNAAQ). The interval 1-22 (MTEPTQPNAAQPNVVPEVDDNK) is disordered. Mg(2+) contacts are provided by glutamate 423 and glutamate 430.

This sequence belongs to the class-II aminoacyl-tRNA synthetase family. In terms of assembly, homodimer. The cofactor is Mg(2+).

It is found in the cytoplasm. The enzyme catalyses tRNA(Lys) + L-lysine + ATP = L-lysyl-tRNA(Lys) + AMP + diphosphate. The polypeptide is Lysine--tRNA ligase (Paraburkholderia xenovorans (strain LB400)).